The chain runs to 40 residues: Thioredoxin (40 aa).

Residues C29 and C32 are joined by a disulfide bond.

It belongs to the thioredoxin family.

Participates in various redox reactions through the reversible oxidation of its active center dithiol to a disulfide and catalyzes dithiol-disulfide exchange reactions. The sequence is that of Thioredoxin (trxA) from Clostridium sporogenes.